The primary structure comprises 179 residues: Macro domain-containing protein XAC3343 (179 aa).

One can recognise a Macro domain in the interval 1 to 175 (MRIEVWQGDI…AYQQALATQE (175 aa)).

Belongs to the MacroD-type family.

This Xanthomonas axonopodis pv. citri (strain 306) protein is Macro domain-containing protein XAC3343.